Reading from the N-terminus, the 330-residue chain is PDZ and LIM domain protein 4 (330 aa).

The PDZ domain maps to 1–84; it reads MPHSVTLRGP…HLTLSVSRPE (84 aa). The disordered stretch occupies residues 104–180; sequence IDPEIQDGSP…DPARGLPRSR (77 aa). The span at 111-121 shows a compositional bias: low complexity; the sequence is GSPTTSRRPSG. Residues S112, S116, S120, and S135 each carry the phosphoserine modification. Over residues 148 to 163 the composition is skewed to polar residues; the sequence is NGSSEATLPAQMSTLH. One can recognise an LIM zinc-binding domain in the interval 253–312; the sequence is PECTRCGHGIVGTIVKARDKLYHPECFMCSDCGLNLKQRGYFFLDERLYCESHAKARVKP.

In terms of assembly, homodimer. Interacts with PTPN13. Interacts (via C-terminus only or via combined C-terminus and LIM domain, but not LIM domain only) with PTPN13 (via the second or fourth PDZ domains). Found in a complex with PTPN13 and TRIP6. Interacts (via PDZ domain) with ACTN1 and ACTN2 (via C-terminal SDL residues). Interacts (via PDZ domain) with TRIP6 (via the second LIM domain or via the third LIM domain plus C-terminus). Interacts (via LIM domain) with GRIA1 (via C-terminus); this interaction as well as the interaction with alpha-actinin is required for their colocalization in early endosomes. Interacts with PDLIM1. Forms (via LIM domain) a heterodimer with PDLIM3. Interacts directly with SRC (via kinase domain and to a lesser extent the SH2 domain). Isoform 2 interacts with NQO1. NQO1-stabilized isoform 2 heterodimerizes with isoform 1. Phosphorylated on tyrosine residue(s). Can be dephosphorylated by PTPN13. Found in brain.

The protein resides in the cytoplasm. The protein localises to the cytoskeleton. It localises to the nucleus. It is found in the perinuclear region. Its subcellular location is the cell projection. The protein resides in the lamellipodium. The protein localises to the dendritic spine. It localises to the early endosome membrane. It is found in the recycling endosome membrane. Its subcellular location is the synapse. The protein resides in the synaptosome. In terms of biological role, suppresses SRC activation by recognizing and binding to active SRC and facilitating PTPN13-mediated dephosphorylation of SRC 'Tyr-419' leading to its inactivation. Inactivated SRC dissociates from this protein allowing the initiation of a new SRC inactivation cycle. Involved in reorganization of the actin cytoskeleton. In nonmuscle cells, binds to ACTN1 (alpha-actinin-1), increases the affinity of ACTN1 to F-actin (filamentous actin), and promotes formation of actin stress fibers. Involved in regulation of the synaptic AMPA receptor transport in dendritic spines of hippocampal pyramidal neurons directing the receptors toward an insertion at the postsynaptic membrane. Links endosomal surface-internalized GRIA1-containing AMPA receptors to the alpha-actinin/actin cytoskeleton. Increases AMPA receptor-mediated excitatory postsynaptic currents in neurons. Functionally, involved in reorganization of the actin cytoskeleton and in regulation of cell migration. In response to oxidative stress, binds to NQO1, which stabilizes it and protects it from ubiquitin-independent degradation by the core 20S proteasome. Stabilized protein is able to heterodimerize with isoform 1 changing the subcellular location of it from cytoskeleton and nuclei to cytosol, leading to loss of isoforms 1 ability to induce formation of actin stress fibers. Counteracts the effects produced by isoform 1 on organization of actin cytoskeleton and cell motility to fine-tune actin cytoskeleton rearrangement and to attenuate cell migration. The chain is PDZ and LIM domain protein 4 (PDLIM4) from Homo sapiens (Human).